Here is an 835-residue protein sequence, read N- to C-terminus: Ribosome-releasing factor 2, mitochondrial (835 aa).

The transit peptide at 1-50 directs the protein to the mitochondrion; it reads MPWCNTRLRTCGASPKIFLRRVRCPVLLHNWTIGRVSSVSKMILRFLRSY. Positions 57-343 constitute a tr-type G domain; that stretch reads TRVRNIGIIA…AVVDYLPSPA (287 aa). Residues 66–73, 131–135, and 183–186 each bind GTP; these read AHIDAGKT, DTPGH, and NKMD.

This sequence belongs to the TRAFAC class translation factor GTPase superfamily. Classic translation factor GTPase family. EF-G/EF-2 subfamily.

It is found in the mitochondrion. Its function is as follows. Mitochondrial GTPase that mediates the disassembly of ribosomes from messenger RNA at the termination of mitochondrial protein biosynthesis. Not involved in the GTP-dependent ribosomal translocation step during translation elongation. This chain is Ribosome-releasing factor 2, mitochondrial, found in Eremothecium gossypii (strain ATCC 10895 / CBS 109.51 / FGSC 9923 / NRRL Y-1056) (Yeast).